The primary structure comprises 89 residues: Small ribosomal subunit protein uS14A (89 aa).

Belongs to the universal ribosomal protein uS14 family. In terms of assembly, part of the 30S ribosomal subunit. Contacts proteins S3 and S10.

Its function is as follows. Binds 16S rRNA, required for the assembly of 30S particles and may also be responsible for determining the conformation of the 16S rRNA at the A site. The chain is Small ribosomal subunit protein uS14A from Listeria innocua serovar 6a (strain ATCC BAA-680 / CLIP 11262).